Here is a 76-residue protein sequence, read N- to C-terminus: DNA-directed RNA polymerase subunit omega (76 aa).

This sequence belongs to the RNA polymerase subunit omega family. In terms of assembly, in cyanobacteria the RNAP catalytic core is composed of 2 alpha, 1 beta, 1 beta', 1 gamma and 1 omega subunit. When a sigma factor is associated with the core the holoenzyme is formed, which can initiate transcription.

The catalysed reaction is RNA(n) + a ribonucleoside 5'-triphosphate = RNA(n+1) + diphosphate. Promotes RNA polymerase assembly. Latches the N- and C-terminal regions of the beta' subunit thereby facilitating its interaction with the beta and alpha subunits. This is DNA-directed RNA polymerase subunit omega from Synechococcus elongatus (strain ATCC 33912 / PCC 7942 / FACHB-805) (Anacystis nidulans R2).